The chain runs to 198 residues: Fimbriae W protein (198 aa).

Positions 127 to 192 (HYCTTRHFSV…QFLKYIRVNL (66 aa)) constitute an HTH luxR-type domain.

The protein localises to the fimbrium. This is Fimbriae W protein (fimW) from Salmonella typhimurium (strain LT2 / SGSC1412 / ATCC 700720).